Here is a 409-residue protein sequence, read N- to C-terminus: MNPALARLQARGFIRQCTDLSALSARMDAGPLTFYVGVDPTGSSLHVGHMLPMFALKHLCDAGHRGCVLIGGGTARIGDPSGKTSMRKMLDYATLDAYAGAIVAQLDHFLSFDHRHVFYVNNRDWLAHLNYIDFLREVGAHFSVNKMLTYEAYKKRLETGLSFLEFNYQLLQSYDFLTLSDRYAVELQIGGDDQWGNIVAGADLVRRVRGKTVHGLTFPLITRADGQKMGKTEQGALFLDPALVSPYDFFQYWRNTPDEDVRRFLLLFTFLSVRDVEAILTQGINCAKELLAYEVTRLMHGTAVAQVALQGARAAFGGCGDKCALPTFELTQCTLQVGIKVTDLFVQVGLCTTKSDARRLIAQGGAFVGLQRVADIGAVIDQSALDLDGTVIVRAGKKRVVRIVTDVLE.

Tyrosine 35 contributes to the L-tyrosine binding site. The 'HIGH' region motif lies at 40–49; the sequence is PTGSSLHVGH. L-tyrosine-binding residues include tyrosine 168 and glutamine 172. The 'KMSKS' region signature appears at 228–232; it reads KMGKT. Lysine 231 serves as a coordination point for ATP. The S4 RNA-binding domain occupies 339 to 404; it reads IKVTDLFVQV…AGKKRVVRIV (66 aa).

Belongs to the class-I aminoacyl-tRNA synthetase family. TyrS type 1 subfamily. In terms of assembly, homodimer.

The protein resides in the cytoplasm. It catalyses the reaction tRNA(Tyr) + L-tyrosine + ATP = L-tyrosyl-tRNA(Tyr) + AMP + diphosphate + H(+). Its function is as follows. Catalyzes the attachment of tyrosine to tRNA(Tyr) in a two-step reaction: tyrosine is first activated by ATP to form Tyr-AMP and then transferred to the acceptor end of tRNA(Tyr). This chain is Tyrosine--tRNA ligase, found in Treponema pallidum (strain Nichols).